The primary structure comprises 200 residues: TATA-box-binding protein (200 aa).

Repeat copies occupy residues L25–I101 and I115–L192.

This sequence belongs to the TBP family. Belongs to the TFIID complex together with the TBP-associated factors (TAFs). Binds DNA as monomer.

The protein localises to the nucleus. In terms of biological role, general transcription factor that functions at the core of the DNA-binding multiprotein factor TFIID. Binding of TFIID to the TATA box is the initial transcriptional step of the pre-initiation complex (PIC), playing a role in the activation of eukaryotic genes transcribed by RNA polymerase II. This chain is TATA-box-binding protein, found in Mesembryanthemum crystallinum (Common ice plant).